Reading from the N-terminus, the 446-residue chain is Hercynine oxygenase (446 aa).

H51 lines the Fe cation pocket. Residue 87-90 participates in gamma-L-glutamyl-L-cysteine binding; the sequence is RASR. Fe cation is bound by residues H134 and H138. Gamma-L-glutamyl-L-cysteine contacts are provided by D416 and R420.

This sequence belongs to the EgtB family. Monomer. Fe(2+) is required as a cofactor.

The enzyme catalyses gamma-L-glutamyl-L-cysteine + hercynine + O2 = gamma-L-glutamyl-hercynylcysteine S-oxide + H2O. The protein operates within amino-acid biosynthesis; ergothioneine biosynthesis. Functionally, catalyzes the oxidative sulfurization of hercynine (N-alpha,N-alpha,N-alpha-trimethyl-L-histidine) into hercynyl-gamma-L-glutamyl-L-cysteine sulfoxide, a step in the biosynthesis pathway of ergothioneine. The sequence is that of Hercynine oxygenase from Mycolicibacterium thermoresistibile (strain ATCC 19527 / DSM 44167 / CIP 105390 / JCM 6362 / NCTC 10409 / 316) (Mycobacterium thermoresistibile).